The following is a 314-amino-acid chain: Short chain dehydrogenase atnD (314 aa).

L41, K66, D90, and N116 together coordinate NADP(+). Residues S171 and Y204 each act as proton donor in the active site. NADP(+) contacts are provided by Y204 and K208. K208 (lowers pKa of active site Tyr) is an active-site residue.

The protein belongs to the short-chain dehydrogenases/reductases (SDR) family.

Its pathway is secondary metabolite biosynthesis. Functionally, short chain dehydrogenase; part of the gene cluster that mediates the biosynthesis of aspercryptins, linear lipopeptides built from six amino acids including 2 highly unusual and nonproteogenic amino acids, 2-amino-octanoic acid (2aoa) and 2-amino-dodecanol (2adol). The core structure of aspercryptins is as follows: Ser/Ala-Thr-Ile/Val-2aoa-Asn-2adol. The first step of aspercryptin biosynthesis is the generation of the fatty acid precursors, octanoic and dodecanoic acids, by the FAS subunits atnF and atnM. The fatty acid precursors are likely transformed into the corresponding alpha-amino fatty acids in three steps. First, they are hydroxylated by the cytochrome P450 monooxygenase atnE, then oxidized to the corresponding alpha-keto acids by the NAD(P)-dependent oxidoreductase atnD, and finally converted to the alpha-amino fatty acids by the PLP-dependent aminotransferases atnH or atnJ. the alpha-amino fatty acids, 2-amino-octanoic and 2-amino-dodecanoic acids, are recognized, activated, and covalently tethered to the NRPS atnA by its fourth and sixth adenylation domains. The second module of atnA is the Thr module and contains an epimerase (E) domain responsible for the epimerization of Thr to D-allo-Thr. Additionally, despite atnA having only one epimerase domain, the first amino acid of aspercryptin A1 is D-Ser, suggesting that serine is either loaded directly as D-Ser on the first module or that the epimerase domain in the threonine module epimerizes both L-Ser and L-Thr. After condensation of the hexapeptide of aspercryptin, the C-terminal reductase (TE) domain might be involved in the reductive release and production of the aldehyde hexapeptide. Further reduction would generate aspercryptins. The variety of aspercryptins produced reflects the flexibility of the atnA NRPS, allowing incorporation of alanine instead of serine, valine for isoleucine, and a C10 fatty amino alcohol instead of the C12 version. AtnB seems to be involved in the selectivity for Ile versus Val by the third module. Moreover, type B, C and D aspercryptins have an additional N-terminal cichorine, acetyl and propionyl group respectively. The chain is Short chain dehydrogenase atnD from Emericella nidulans (strain FGSC A4 / ATCC 38163 / CBS 112.46 / NRRL 194 / M139) (Aspergillus nidulans).